An 84-amino-acid chain; its full sequence is MKVTLIAILTCAAVLVLHTTAAEELEESQLMEVGMPDTELAAVDEERLFECSVSCEIEKEGNKDCKKKKRKGGWKCKFNMCVKV.

Positions 1–22 (MKVTLIAILTCAAVLVLHTTAA) are cleaved as a signal peptide. The propeptide occupies 23–47 (EELEESQLMEVGMPDTELAAVDEER). Intrachain disulfides connect C51/C65 and C55/C76.

This sequence belongs to the neurotoxin 12 (Hwtx-2) family. 02 (Hwtx-2) subfamily. Expressed by the venom gland.

Its subcellular location is the secreted. In terms of biological role, postsynaptic neurotoxin. The protein is U4-theraphotoxin-Hhn1aa of Cyriopagopus hainanus (Chinese bird spider).